A 347-amino-acid polypeptide reads, in one-letter code: Elongation factor Ts (347 aa).

Residues 80–83 (TDFV) form an involved in Mg(2+) ion dislocation from EF-Tu region.

The protein belongs to the EF-Ts family.

The protein localises to the cytoplasm. Its function is as follows. Associates with the EF-Tu.GDP complex and induces the exchange of GDP to GTP. It remains bound to the aminoacyl-tRNA.EF-Tu.GTP complex up to the GTP hydrolysis stage on the ribosome. This Streptococcus sanguinis (strain SK36) protein is Elongation factor Ts.